Consider the following 159-residue polypeptide: S-ribosylhomocysteine lyase (159 aa).

3 residues coordinate Fe cation: His-53, His-57, and Cys-124.

It belongs to the LuxS family. As to quaternary structure, homodimer. Requires Fe cation as cofactor.

The enzyme catalyses S-(5-deoxy-D-ribos-5-yl)-L-homocysteine = (S)-4,5-dihydroxypentane-2,3-dione + L-homocysteine. Involved in the synthesis of autoinducer 2 (AI-2) which is secreted by bacteria and is used to communicate both the cell density and the metabolic potential of the environment. The regulation of gene expression in response to changes in cell density is called quorum sensing. Catalyzes the transformation of S-ribosylhomocysteine (RHC) to homocysteine (HC) and 4,5-dihydroxy-2,3-pentadione (DPD). This is S-ribosylhomocysteine lyase from Desulfotalea psychrophila (strain LSv54 / DSM 12343).